Here is a 273-residue protein sequence, read N- to C-terminus: Cysteine protease S273R (273 aa).

Active-site residues include histidine 168 and asparagine 187. Substrate is bound at residue glutamine 226. Cysteine 232 functions as the Nucleophile in the catalytic mechanism.

This sequence belongs to the peptidase C63 family.

It localises to the host cytoplasm. The protein localises to the virion. Its function is as follows. Cysteine protease that plays several role during infection including processing of the structural polyprotein or inhibition of the host immune response. Catalyzes the maturation of the pp220 and pp62 polyprotein precursors into core-shell proteins. Plays a role in the disruption of host pyroptosis via specific cleavage of gasdermin D/GSDMD. In addition, strongly decreases the host cGAS-STING signaling by targeting IKBKE via its enzymatic activity. Also impairs host FOXJ1-mediated antiviral effect via degradation of FOXJ1. Cleaves host G3BP1 inducing loss of stress granules formation. Interacts with and induces the degradation of host STAT2 via polyubiquitination of the latter. The protein is Cysteine protease S273R of Ornithodoros (relapsing fever ticks).